Consider the following 341-residue polypeptide: L-threonine 3-dehydrogenase (341 aa).

Cys-38 is a binding site for Zn(2+). Catalysis depends on charge relay system residues Thr-40 and His-43. Positions 63, 64, 93, 96, 99, and 107 each coordinate Zn(2+). NAD(+) contacts are provided by residues Ile-175, Asp-195, Arg-200, 262 to 264 (LGI), and 286 to 287 (IY).

Belongs to the zinc-containing alcohol dehydrogenase family. Homotetramer. It depends on Zn(2+) as a cofactor.

The protein localises to the cytoplasm. It carries out the reaction L-threonine + NAD(+) = (2S)-2-amino-3-oxobutanoate + NADH + H(+). It functions in the pathway amino-acid degradation; L-threonine degradation via oxydo-reductase pathway; glycine from L-threonine: step 1/2. Catalyzes the NAD(+)-dependent oxidation of L-threonine to 2-amino-3-ketobutyrate. This Enterobacter sp. (strain 638) protein is L-threonine 3-dehydrogenase.